The following is a 145-amino-acid chain: MARMHTRKRGRSGSKKVYGVQPSWIQYSKDEVINTIVNLKKSGVPPSVIGIKLRDQYGIPTVKAVLGMKLGKVLSEKGLKDDVPEDLGNLIKRYNNVAKHVELNPKDQANKRGRDLIMAKMLRLVKYYKRTGVLDEKWNLSKVLR.

It belongs to the universal ribosomal protein uS15 family. As to quaternary structure, part of the 30S ribosomal subunit.

This is Small ribosomal subunit protein uS15 from Thermoplasma acidophilum (strain ATCC 25905 / DSM 1728 / JCM 9062 / NBRC 15155 / AMRC-C165).